A 663-amino-acid chain; its full sequence is DNA topoisomerase 4 subunit B (663 aa).

Residues Tyr7, Asn47, Asp74, 114-120 (GLHGVGA), and Lys341 each bind ATP. Positions 386–418 (REAARKAREDARSGKKNKRKDTLLSGKLTPAQS) are disordered. A compositionally biased stretch (basic and acidic residues) spans 387 to 398 (EAARKAREDARS). In terms of domain architecture, Toprim spans 424-538 (NELYLVEGDS…AGRVFIALPP (115 aa)). Residues Glu430, Asp503, and Asp505 each contribute to the Mg(2+) site.

Belongs to the type II topoisomerase family. ParE type 2 subfamily. In terms of assembly, heterotetramer composed of ParC and ParE. Mg(2+) serves as cofactor. Mn(2+) is required as a cofactor. The cofactor is Ca(2+).

The catalysed reaction is ATP-dependent breakage, passage and rejoining of double-stranded DNA.. In terms of biological role, topoisomerase IV is essential for chromosome segregation. It relaxes supercoiled DNA. Performs the decatenation events required during the replication of a circular DNA molecule. The chain is DNA topoisomerase 4 subunit B from Staphylococcus aureus (strain MRSA252).